The primary structure comprises 66 residues: Conotoxin mr5.2 (66 aa).

Residues 1 to 19 (MRCVPVFVILLLLIASAPT) form the signal peptide. A propeptide spanning residues 20–48 (VDAQLKTKDDMPLASFHANVKRTLQILRD) is cleaved from the precursor. 4-carboxyglutamate is present on residues E57 and E61. Position 65 is an asparagine amide (N65).

In terms of processing, contains 2 disulfide bonds that can be either 'C1-C3, C2-C4' or 'C1-C4, C2-C3', since these disulfide connectivities have been observed for conotoxins with cysteine framework V (for examples, see AC P0DQQ7 and AC P81755). In terms of tissue distribution, expressed by the venom duct.

It is found in the secreted. This chain is Conotoxin mr5.2, found in Conus marmoreus (Marble cone).